Consider the following 479-residue polypeptide: F-box protein SKIP17 (479 aa).

Residues 92 to 138 (NSNSWSLPPELTIKVFSMLDTKSMMQAAVCCTMFNKCAMDRLCYSHI) enclose the F-box domain. The segment at 435-479 (EMMEAEDDEVDEEDDSDDDTDDVSDEDESENDDDMGMGFDVDYLL) is disordered. The span at 437 to 469 (MEAEDDEVDEEDDSDDDTDDVSDEDESENDDDM) shows a compositional bias: acidic residues.

As to quaternary structure, part of a SCF (ASK-cullin-F-box) protein ligase complex. Interacts with SPK1B/ASK2.

It is found in the nucleus. It functions in the pathway protein modification; protein ubiquitination. Functionally, component of SCF(ASK-cullin-F-box) E3 ubiquitin ligase complexes, which may mediate the ubiquitination and subsequent proteasomal degradation of target proteins. The sequence is that of F-box protein SKIP17 (SKIP17) from Arabidopsis thaliana (Mouse-ear cress).